Here is a 292-residue protein sequence, read N- to C-terminus: Pyridoxal 5'-phosphate synthase subunit PdxS (292 aa).

D22 contributes to the D-ribose 5-phosphate binding site. K79 acts as the Schiff-base intermediate with D-ribose 5-phosphate in catalysis. G151 contributes to the D-ribose 5-phosphate binding site. R163 provides a ligand contact to D-glyceraldehyde 3-phosphate. Residues G212 and G233 to S234 contribute to the D-ribose 5-phosphate site.

This sequence belongs to the PdxS/SNZ family. As to quaternary structure, in the presence of PdxT, forms a dodecamer of heterodimers.

It carries out the reaction aldehydo-D-ribose 5-phosphate + D-glyceraldehyde 3-phosphate + L-glutamine = pyridoxal 5'-phosphate + L-glutamate + phosphate + 3 H2O + H(+). Its pathway is cofactor biosynthesis; pyridoxal 5'-phosphate biosynthesis. Catalyzes the formation of pyridoxal 5'-phosphate from ribose 5-phosphate (RBP), glyceraldehyde 3-phosphate (G3P) and ammonia. The ammonia is provided by the PdxT subunit. Can also use ribulose 5-phosphate and dihydroxyacetone phosphate as substrates, resulting from enzyme-catalyzed isomerization of RBP and G3P, respectively. The sequence is that of Pyridoxal 5'-phosphate synthase subunit PdxS from Caldanaerobacter subterraneus subsp. tengcongensis (strain DSM 15242 / JCM 11007 / NBRC 100824 / MB4) (Thermoanaerobacter tengcongensis).